We begin with the raw amino-acid sequence, 809 residues long: H(+)/Cl(-) exchange transporter 7 (809 aa).

At 1 to 130 (MANVSKKVSW…TAFRTVEIKR (130 aa)) the chain is on the cytoplasmic side. Phosphoserine is present on residues S9 and S64. Transmembrane regions (helical) follow at residues 131–163 (WVICAMVGILTGLVACFIDIVVEKLAGLKYRLV) and 178–201 (FSLLLWAALNAAFVLLGSTIVAFI). Residues 207–211 (GSGIP) carry the Selectivity filter part_1 motif. S208 contributes to the chloride binding site. The helical intramembrane region spans 210-217 (IPQIKCFL). Transmembrane regions (helical) follow at residues 227 to 245 (RLKTLVIKVSGVILSVVGG) and 251 to 268 (EGPMIHSGSVIAAGISQG). A Selectivity filter part_2 motif is present at residues 249-253 (GKEGP). Intramembrane regions (helical) lie at residues 292-304 (FVSAGAAAGVSAA) and 308-316 (PVGGVLFSL). The next 5 membrane-spanning stretches (helical) occupy residues 326–345 (FLTWRIFFASMISTFTLNFV), 379–409 (IPIFIAMGVVGGILGAVFNALNYWLTMFRIR), 414–436 (PCLQVVEATLVAAVTATAAFVLI), 491–511 (PMTLGLFTLVYFFLACWTYGL), and 516–539 (GVFIPSLLIGAAWGRLFGISLSYI). The Selectivity filter part_3 signature appears at 516-520 (GVFIP). F518 provides a ligand contact to chloride. The helical intramembrane region spans 549 to 563 (GKYALMGAAAQLGGI). The segment at residues 564–566 (VRM) is an intramembrane region (note=Loop between two helices). The helical intramembrane region spans 567 to 578 (TLSLTVIMMEAT). The segment at residues 579–582 (SSVT) is an intramembrane region (note=Loop between two helices). A helical transmembrane segment spans residues 583–601 (YGFPIMLVLMTAKIVGDVF). At 602–809 (IEGLYDMHIQ…GLEELSLAQT (208 aa)) the chain is on the cytoplasmic side. Y606 lines the chloride pocket. 2 consecutive CBS domains span residues 635–699 (MSTP…VFVE) and 745–803 (MNPS…GLEE). ATP contacts are provided by residues 662–664 (HNG) and 787–790 (TRKD). S805 is subject to Phosphoserine.

It belongs to the chloride channel (TC 2.A.49) family. ClC-7/CLCN7 subfamily. As to quaternary structure, chloride channel 7 are heteromers of alpha (CLCN7) and beta (OSTM1) subunits.

It localises to the lysosome membrane. The enzyme catalyses 2 chloride(in) + H(+)(out) = 2 chloride(out) + H(+)(in). Slowly voltage-gated channel mediating the exchange of chloride ions against protons. Functions as antiporter and contributes to the acidification of the lysosome lumen and may be involved in maintaining lysosomal pH. The CLC channel family contains both chloride channels and proton-coupled anion transporters that exchange chloride or another anion for protons. The presence of conserved gating glutamate residues is typical for family members that function as antiporters. This Bos taurus (Bovine) protein is H(+)/Cl(-) exchange transporter 7 (CLCN7).